Consider the following 780-residue polypeptide: Exocyst complex component 3-like protein (780 aa).

Belongs to the SEC6 family.

It localises to the cytoplasmic vesicle. The protein localises to the secretory vesicle. Functionally, as part of the exocyst, may play a role in regulated exocytosis. In Danio rerio (Zebrafish), this protein is Exocyst complex component 3-like protein (exoc3l1).